Consider the following 70-residue polypeptide: Conotoxin ArMKLT2-0112 (70 aa).

The signal sequence occupies residues 1–22 (MKLTCVLIIAVLFLTACQLTTG). The propeptide occupies 23 to 40 (EQKDHALRSTDKNSKLTR). At glutamine 41 the chain carries Pyrrolidone carboxylic acid. Intrachain disulfides connect cysteine 42-cysteine 56, cysteine 49-cysteine 60, and cysteine 55-cysteine 67.

This sequence belongs to the conotoxin O1 superfamily. As to expression, expressed by the venom duct.

The protein localises to the secreted. This chain is Conotoxin ArMKLT2-0112, found in Conus arenatus (Sand-dusted cone).